The following is a 1087-amino-acid chain: Exoglucanase XynX (1087 aa).

An N-terminal signal peptide occupies residues 1-30; the sequence is MKNNLSKFVSIFTAFIMIFGTSLFFPHVSA. The CBM-cenC domain occupies 37 to 188; that stretch reads ANLVSNGDFE…YIDDVVVTPQ (152 aa). The GH10 domain occupies 204–527; the sequence is QNDIPDLSSV…KPAYWAIADP (324 aa). The active-site Proton donor is E347. The active site involves D389. E452 serves as the catalytic Nucleophile. SLH domains follow at residues 903–966, 967–1025, and 1028–1087; these read KKSV…YNGE, FSDV…KEEN, and ATSF…SNNL.

Belongs to the glycosyl hydrolase 10 (cellulase F) family.

The catalysed reaction is Hydrolysis of (1-&gt;4)-beta-D-glucosidic linkages in cellulose and cellotetraose, releasing cellobiose from the non-reducing ends of the chains.. The protein is Exoglucanase XynX (xynX) of Acetivibrio thermocellus (Hungateiclostridium thermocellum).